The sequence spans 239 residues: MKNNLPIIALDFASAEETLAFLAPFQQEPLFVKVGMELFYQEGPSIVKQLKERNCELFLDLKLHDIPTTVNKAMKRLASLGVDLVNVHAAGGKKMMQAALEGLEEGTPAGKKRPSLIAVTQLTSTSEQIMKDELLIEKSLIDTVVHYSKQAEESGLDGVVCSVHEAKAIYQAVSPSFLTVTPGIRMSEDAANDQVRVATPAIAREKGSSAIVVGRSITKAEDPVKAYKAVRLEWEGIKS.

Substrate-binding positions include Asp-11, Lys-33, Asp-60–Thr-69, Thr-123, Arg-185, Gln-194, Gly-214, and Arg-215. Lys-62 acts as the Proton donor in catalysis.

It belongs to the OMP decarboxylase family. Type 1 subfamily. In terms of assembly, homodimer.

The catalysed reaction is orotidine 5'-phosphate + H(+) = UMP + CO2. Its pathway is pyrimidine metabolism; UMP biosynthesis via de novo pathway; UMP from orotate: step 2/2. Its function is as follows. Catalyzes the decarboxylation of orotidine 5'-monophosphate (OMP) to uridine 5'-monophosphate (UMP). The sequence is that of Orotidine 5'-phosphate decarboxylase (pyrF) from Bacillus subtilis (strain 168).